The chain runs to 608 residues: MLRTHLSGELRKENAGQSVTLTGWVNRRRDHGGVIFIDLRDRTGIAQVVFRNEDVAERAHALRSEFVLRVTGVVEERPEGSQNPNLASGDIEVSVTEFEVLNESAPLPFQIEDSSSAGEVGEETRLKYRYLDLRRPVQANALRLRSAANKAARTVLDSHDFTEIETPTLTRSTPEGARDFLVPARLRPGTFYALPQSPQLFKQLLQVAGMERYYQIARCYRDEDFRADRQPEFTQLDVEMSFVDQDDVIALGEEIISEVWKLIGYEIKTPIPRMTYADAMRRYGSDKPDLRFDIEITECTEFFQDTTFRVFKNEYVGAVVMTGGASQPRRQLDAWQEWAKQRGAKGLAYILVGEDGELSGPVAKNITDAERAGIAAHVGAQPGDCIFFAAGDTKSSRALLGAARGEIAKKLDLIKEGDWAFTWIVDAPMFEPAADATASGDVALGNSKWTAVHHAFTSPKPEFLDNFDTNPGDALAYAYDIVCNGNEIGGGSIRIHQRDVQERVFEVMGITGEEAREKFGFLLDAFAFGAPPHGGIAFGWDRIVSLLGGFDSIRDVIAFPKSGGGIDPLTDAPAAITPQQRKEAGIDAKPKPKAEAQAEAQAEESAEK.

Position 175 (Glu-175) interacts with L-aspartate. Residues 199-202 (QLFK) are aspartate. Arg-221 is a binding site for L-aspartate. ATP contacts are provided by residues 221–223 (RDE) and Gln-230. An L-aspartate-binding site is contributed by His-453. Glu-487 is an ATP binding site. Arg-494 is an L-aspartate binding site. 539 to 542 (GWDR) serves as a coordination point for ATP. Residues 566–608 (IDPLTDAPAAITPQQRKEAGIDAKPKPKAEAQAEAQAEESAEK) are disordered. Residues 580-596 (QRKEAGIDAKPKPKAEA) show a composition bias toward basic and acidic residues.

The protein belongs to the class-II aminoacyl-tRNA synthetase family. Type 1 subfamily. As to quaternary structure, homodimer.

It localises to the cytoplasm. The catalysed reaction is tRNA(Asx) + L-aspartate + ATP = L-aspartyl-tRNA(Asx) + AMP + diphosphate. Its function is as follows. Aspartyl-tRNA synthetase with relaxed tRNA specificity since it is able to aspartylate not only its cognate tRNA(Asp) but also tRNA(Asn). Reaction proceeds in two steps: L-aspartate is first activated by ATP to form Asp-AMP and then transferred to the acceptor end of tRNA(Asp/Asn). This Corynebacterium glutamicum (strain R) protein is Aspartate--tRNA(Asp/Asn) ligase.